The chain runs to 145 residues: D-aminoacyl-tRNA deacylase (145 aa).

A Gly-cisPro motif, important for rejection of L-amino acids motif is present at residues G137 to P138.

Belongs to the DTD family. As to quaternary structure, homodimer.

It is found in the cytoplasm. It carries out the reaction glycyl-tRNA(Ala) + H2O = tRNA(Ala) + glycine + H(+). The catalysed reaction is a D-aminoacyl-tRNA + H2O = a tRNA + a D-alpha-amino acid + H(+). In terms of biological role, an aminoacyl-tRNA editing enzyme that deacylates mischarged D-aminoacyl-tRNAs. Also deacylates mischarged glycyl-tRNA(Ala), protecting cells against glycine mischarging by AlaRS. Acts via tRNA-based rather than protein-based catalysis; rejects L-amino acids rather than detecting D-amino acids in the active site. By recycling D-aminoacyl-tRNA to D-amino acids and free tRNA molecules, this enzyme counteracts the toxicity associated with the formation of D-aminoacyl-tRNA entities in vivo and helps enforce protein L-homochirality. The polypeptide is D-aminoacyl-tRNA deacylase (Legionella pneumophila (strain Paris)).